Consider the following 164-residue polypeptide: Phosphopantetheine adenylyltransferase (164 aa).

Residue serine 9 participates in substrate binding. ATP contacts are provided by residues 9–10 (SF) and histidine 17. Positions 41, 78, and 92 each coordinate substrate. ATP is bound by residues 93 to 95 (GLR), glutamate 103, and 128 to 134 (SRPITAT).

The protein belongs to the bacterial CoaD family. Homohexamer. The cofactor is Mg(2+).

Its subcellular location is the cytoplasm. The catalysed reaction is (R)-4'-phosphopantetheine + ATP + H(+) = 3'-dephospho-CoA + diphosphate. Its pathway is cofactor biosynthesis; coenzyme A biosynthesis; CoA from (R)-pantothenate: step 4/5. Reversibly transfers an adenylyl group from ATP to 4'-phosphopantetheine, yielding dephospho-CoA (dPCoA) and pyrophosphate. The chain is Phosphopantetheine adenylyltransferase from Rhizobium leguminosarum bv. trifolii (strain WSM2304).